The following is a 108-amino-acid chain: Tetrahydromethanopterin S-methyltransferase subunit B (108 aa).

Residues 80–100 (AFYGIVVGLAFSGLLALIIFI) form a helical membrane-spanning segment.

This sequence belongs to the MtrB family. As to quaternary structure, the complex is composed of 8 subunits; MtrA, MtrB, MtrC, MtrD, MtrE, MtrF, MtrG and MtrH.

The protein localises to the cell membrane. The enzyme catalyses 5-methyl-5,6,7,8-tetrahydromethanopterin + coenzyme M + 2 Na(+)(in) = 5,6,7,8-tetrahydromethanopterin + methyl-coenzyme M + 2 Na(+)(out). It functions in the pathway one-carbon metabolism; methanogenesis from CO(2); methyl-coenzyme M from 5,10-methylene-5,6,7,8-tetrahydromethanopterin: step 2/2. Part of a complex that catalyzes the formation of methyl-coenzyme M and tetrahydromethanopterin from coenzyme M and methyl-tetrahydromethanopterin. This is an energy-conserving, sodium-ion translocating step. The chain is Tetrahydromethanopterin S-methyltransferase subunit B from Methanosarcina acetivorans (strain ATCC 35395 / DSM 2834 / JCM 12185 / C2A).